The following is a 496-amino-acid chain: uncharacterized protein (496 aa).

The span at 118-129 (LDRPFIKPRREN) shows a compositional bias: basic and acidic residues. The interval 118-187 (LDRPFIKPRR…NPHQSNRNTS (70 aa)) is disordered. Polar residues predominate over residues 151-187 (TSDSQYASPFENHSITNLPIGQKQPFNNPHQSNRNTS).

This is an uncharacterized protein from Acanthamoeba polyphaga mimivirus (APMV).